The sequence spans 194 residues: Phosphoheptose isomerase (194 aa).

Positions Ile37–Val194 constitute an SIS domain. A substrate-binding site is contributed by Asn52–Gly54. 2 residues coordinate Zn(2+): His61 and Glu65. Residues Glu65, Asn93 to Asp94, Ser119 to Ser121, Ser124, and Gln172 contribute to the substrate site. Gln172 and His180 together coordinate Zn(2+).

The protein belongs to the SIS family. GmhA subfamily. Homotetramer. Zn(2+) is required as a cofactor.

It localises to the cytoplasm. The catalysed reaction is 2 D-sedoheptulose 7-phosphate = D-glycero-alpha-D-manno-heptose 7-phosphate + D-glycero-beta-D-manno-heptose 7-phosphate. It functions in the pathway carbohydrate biosynthesis; D-glycero-D-manno-heptose 7-phosphate biosynthesis; D-glycero-alpha-D-manno-heptose 7-phosphate and D-glycero-beta-D-manno-heptose 7-phosphate from sedoheptulose 7-phosphate: step 1/1. Catalyzes the isomerization of sedoheptulose 7-phosphate in D-glycero-D-manno-heptose 7-phosphate. In Actinobacillus succinogenes (strain ATCC 55618 / DSM 22257 / CCUG 43843 / 130Z), this protein is Phosphoheptose isomerase.